The chain runs to 458 residues: Retinoic acid receptor alpha-B (458 aa).

The tract at residues 1 to 79 (MYESVDVVGL…PPSPPPPPRV (79 aa)) is modulating. Residues 48–75 (HWSGSNHSVETQSTSSEEIVPSPPSPPP) form a disordered region. A compositionally biased stretch (polar residues) spans 49-64 (WSGSNHSVETQSTSSE). Residues 80 to 155 (YKPCFVCQDK…VGMSKESVRN (76 aa)) constitute a DNA-binding region (nuclear receptor). NR C4-type zinc fingers lie at residues 83 to 103 (CFVC…CEGC) and 119 to 138 (CHRE…CQYC). The hinge stretch occupies residues 156 to 177 (DRNKRKKDDKKQECLENYVLSP). The NR LBD domain occupies 178–412 (DTEKMIEQVR…PLIQEMLENS (235 aa)). A 9aaTAD motif is present at residues 403-411 (PLIQEMLEN). Positions 411 to 458 (NSEGLEGGGSKGAGGGGGGGGGKGAPPGSCSPSLSPSSAHSSPSAHSP) are disordered. A compositionally biased stretch (gly residues) spans 415–435 (LEGGGSKGAGGGGGGGGGKGA). Residues 436 to 458 (PPGSCSPSLSPSSAHSSPSAHSP) are compositionally biased toward low complexity.

The protein belongs to the nuclear hormone receptor family. NR1 subfamily. As to quaternary structure, heterodimer; with an rxr molecule. Binds DNA preferentially as a rar/rxr heterodimer. In the embryo, zygotic expression largely overlaps that of raraa, with high levels in hindbrain, lateral plate mesoderm (LPM) and tail bud, but in later stages rarab is expressed more broadly in the brain, pectoral fin bud and pharyngeal arches.

It localises to the nucleus. Functionally, receptor for retinoic acid. Retinoic acid receptors bind as heterodimers to their target response elements in response to their ligands, all-trans or 9-cis retinoic acid, and regulate gene expression in various biological processes. The rar/rxr heterodimers bind to the retinoic acid response elements (RARE) composed of tandem 5'-AGGTCA-3' sites known as DR1-DR5. Required for hindbrain development and, in lateral plate mesoderm, for specification of the pectoral fins. The protein is Retinoic acid receptor alpha-B of Danio rerio (Zebrafish).